A 66-amino-acid polypeptide reads, in one-letter code: DNA-directed RNA polymerase subunit omega (66 aa).

The protein belongs to the RNA polymerase subunit omega family. In terms of assembly, the RNAP catalytic core consists of 2 alpha, 1 beta, 1 beta' and 1 omega subunit. When a sigma factor is associated with the core the holoenzyme is formed, which can initiate transcription.

The catalysed reaction is RNA(n) + a ribonucleoside 5'-triphosphate = RNA(n+1) + diphosphate. Its function is as follows. Promotes RNA polymerase assembly. Latches the N- and C-terminal regions of the beta' subunit thereby facilitating its interaction with the beta and alpha subunits. The chain is DNA-directed RNA polymerase subunit omega from Bacillus licheniformis (strain ATCC 14580 / DSM 13 / JCM 2505 / CCUG 7422 / NBRC 12200 / NCIMB 9375 / NCTC 10341 / NRRL NRS-1264 / Gibson 46).